The following is a 116-amino-acid chain: Protein aq_1857 (116 aa).

It belongs to the HesB/IscA family.

The chain is Protein aq_1857 from Aquifex aeolicus (strain VF5).